A 216-amino-acid chain; its full sequence is Acyl-homoserine-lactone synthase (216 aa).

The protein belongs to the autoinducer synthase family.

It carries out the reaction a fatty acyl-[ACP] + S-adenosyl-L-methionine = an N-acyl-L-homoserine lactone + S-methyl-5'-thioadenosine + holo-[ACP] + H(+). Functionally, required for the synthesis of OHHL (N-(3-oxohexanoyl)-L-homoserine lactone), an autoinducer molecule which binds to a yet uncharacterized transcriptional regulator. The chain is Acyl-homoserine-lactone synthase (eagI) from Enterobacter agglomerans (Erwinia herbicola).